The chain runs to 98 residues: NADH-ubiquinone oxidoreductase chain 4L (98 aa).

Transmembrane regions (helical) follow at residues 2–22 (PSIS…MLVF), 29–49 (SLLC…LFIM), and 61–81 (ILLL…LVMV).

This sequence belongs to the complex I subunit 4L family. Core subunit of respiratory chain NADH dehydrogenase (Complex I) which is composed of 45 different subunits.

It is found in the mitochondrion inner membrane. The catalysed reaction is a ubiquinone + NADH + 5 H(+)(in) = a ubiquinol + NAD(+) + 4 H(+)(out). Functionally, core subunit of the mitochondrial membrane respiratory chain NADH dehydrogenase (Complex I) which catalyzes electron transfer from NADH through the respiratory chain, using ubiquinone as an electron acceptor. Part of the enzyme membrane arm which is embedded in the lipid bilayer and involved in proton translocation. This is NADH-ubiquinone oxidoreductase chain 4L (MT-ND4L) from Lepilemur sahamalazensis (Sahamalaza sportive lemur).